A 666-amino-acid chain; its full sequence is Transketolase (666 aa).

H26 provides a ligand contact to substrate. Thiamine diphosphate contacts are provided by residues H66 and 114 to 116 (GPL). Residue D155 coordinates Mg(2+). The thiamine diphosphate site is built by G156 and N185. Mg(2+) is bound by residues N185 and I187. Positions 261, 358, and 385 each coordinate substrate. Thiamine diphosphate is bound at residue H261. Catalysis depends on E411, which acts as the Proton donor. F437 provides a ligand contact to thiamine diphosphate. H461, D469, and R520 together coordinate substrate.

It belongs to the transketolase family. Homodimer. Mg(2+) serves as cofactor. It depends on Ca(2+) as a cofactor. Requires Mn(2+) as cofactor. The cofactor is Co(2+). Thiamine diphosphate is required as a cofactor.

It carries out the reaction D-sedoheptulose 7-phosphate + D-glyceraldehyde 3-phosphate = aldehydo-D-ribose 5-phosphate + D-xylulose 5-phosphate. Its function is as follows. Catalyzes the transfer of a two-carbon ketol group from a ketose donor to an aldose acceptor, via a covalent intermediate with the cofactor thiamine pyrophosphate. This is Transketolase (tkt) from Buchnera aphidicola subsp. Baizongia pistaciae (strain Bp).